A 205-amino-acid polypeptide reads, in one-letter code: Probable GTP-binding protein EngB (205 aa).

An EngB-type G domain is found at 27–201 (TGIEIAFAGR…AAKLDFWFSP (175 aa)). GTP is bound by residues 35-42 (GRSNAGKS), 62-66 (GRTQL), 80-83 (DLPG), 147-150 (TKAD), and 180-182 (FSA). Residues Ser-42 and Thr-64 each contribute to the Mg(2+) site.

It belongs to the TRAFAC class TrmE-Era-EngA-EngB-Septin-like GTPase superfamily. EngB GTPase family. The cofactor is Mg(2+).

Necessary for normal cell division and for the maintenance of normal septation. The polypeptide is Probable GTP-binding protein EngB (Haemophilus influenzae (strain PittEE)).